Reading from the N-terminus, the 332-residue chain is 2,3-diketo-L-gulonate reductase (332 aa).

His44 acts as the Proton donor in catalysis. NAD(+)-binding positions include 168–174 (ITMVDMS), 224–225 (WK), and 304–306 (GHE).

It belongs to the LDH2/MDH2 oxidoreductase family. DlgD subfamily. Homodimer.

The protein resides in the cytoplasm. It catalyses the reaction 3-dehydro-L-gulonate + NAD(+) = 2,3-dioxo-L-gulonate + NADH + H(+). The enzyme catalyses 3-dehydro-L-gulonate + NADP(+) = 2,3-dioxo-L-gulonate + NADPH + H(+). In terms of biological role, catalyzes the reduction of 2,3-diketo-L-gulonate in the presence of NADH, to form 3-keto-L-gulonate. In Escherichia coli O127:H6 (strain E2348/69 / EPEC), this protein is 2,3-diketo-L-gulonate reductase.